The following is a 192-amino-acid chain: E3 ubiquitin-protein ligase RNF183 (192 aa).

Over 1 to 161 the chain is Cytoplasmic; sequence MAEQQGRELE…RECFRNPQFR (161 aa). The RING-type zinc-finger motif lies at 13-60; it reads CPVCWNPFNNTFHTPKMLDCCHSFCVECLAHLSLVTPARRRLLCPLCR. Residues 162–182 traverse the membrane as a helical; Anchor for type IV membrane protein segment; that stretch reads IFAYLMAVILSVTLLLIFSIF. Residues 183–192 lie on the Lumenal side of the membrane; it reads WTKQFLWGVG.

In terms of assembly, interacts with FATE1. Interacts with SEC16A. Interacts with BCL2L1. In terms of processing, autoubiquitinated (in vitro). Kidney and testis.

The protein localises to the endoplasmic reticulum membrane. It is found in the endoplasmic reticulum. The protein resides in the golgi apparatus. Its subcellular location is the cis-Golgi network membrane. It localises to the lysosome membrane. The catalysed reaction is S-ubiquitinyl-[E2 ubiquitin-conjugating enzyme]-L-cysteine + [acceptor protein]-L-lysine = [E2 ubiquitin-conjugating enzyme]-L-cysteine + N(6)-ubiquitinyl-[acceptor protein]-L-lysine.. It participates in protein modification; protein ubiquitination. Functionally, acts as an E3 ubiquitin ligase catalyzing the covalent attachment of ubiquitin moieties onto substrate proteins. Triggers apoptosis in response to prolonged ER stress by mediating the polyubiquitination and subsequent proteasomal degradation of BCL2L1. May collaborate with FATE1 to restrain BIK protein levels thus regulating apoptotic signaling. This Homo sapiens (Human) protein is E3 ubiquitin-protein ligase RNF183 (RNF183).